The chain runs to 191 residues: A-type ATP synthase subunit E (191 aa).

Belongs to the V-ATPase E subunit family. As to quaternary structure, has multiple subunits with at least A(3), B(3), C, D, E, F, H, I and proteolipid K(x).

Its subcellular location is the cell membrane. In terms of biological role, component of the A-type ATP synthase that produces ATP from ADP in the presence of a proton gradient across the membrane. The sequence is that of A-type ATP synthase subunit E from Methanoregula boonei (strain DSM 21154 / JCM 14090 / 6A8).